A 762-amino-acid polypeptide reads, in one-letter code: MRLWKAVVVTLAFVSMDVGVTTAIYAFSHLDRSLLEDIRHFNIFDSVLDLWAACLYRSCLLLGATIGVAKNSALGPRRLRASWLVITLVCLFVGIYAMAKLLLFSEVRRPIRDPWFWALFVWTYISLAASFLLWGLLATVRPDAEALEPGNEGFHGEGGAPAEQASGATLQKLLSYTKPDVAFLVAASFFLIVAALGETFLPYYTGRAIDSIVIQKSMDQFTTAVVVVCLLAIGSSLAAGIRGGIFTLVFARLNIRLRNCLFRSLVSQETSFFDENRTGDLISRLTSDTTMVSDLVSQNINIFLRNTVKVTGVVVFMFSLSWQLSLVTFMGFPIIMMVSNIYGKYYKRLSKEVQSALARASTTAEETISAMKTVRSFANEEEEAEVFLRKLQQVYKLNRKEAAAYMSYVWGSGLTLLVVQVSILYYGGHLVISGQMSSGNLIAFIIYEFVLGDCMESVGSVYSGLMQGVGAAEKVFEFIDRQPTMVHDGRLAPDHLEGRVDFENVTFTYRTRPHTQVLQNVSFSLSPGKVTALVGPSGSGKSSCVNILENFYPLQGGRVLLDGEPIGAYDHKYLHRVISLVSQEPVLFARSITDNISYGLPTVPFEMVVEAAQKANAHGFIMELQDGYSTETGEKGAQLSGGQKQRVAMARALVRNPPVLILDEATSALDAESEYLIQQAIHGNLQRHTVLIIAHRLSTVERAHLIVVLDKGRVVQQGTHQQLLAQGGLYAKLVQRQMLGLEHPLDYTAGHKEPPSNTEHKA.

Helical transmembrane passes span Val-7–Phe-27, Val-47–Gly-67, Leu-84–Phe-104, Phe-116–Leu-136, Val-181–Leu-201, Phe-221–Ile-241, Val-315–Ile-335, and Ser-412–Ile-432. The ABC transmembrane type-1 domain occupies Leu-184–Gln-467. Residues Val-500–Arg-736 enclose the ABC transporter domain. Residue Gly-535–Ser-542 participates in ATP binding.

It belongs to the ABC transporter superfamily. ABCB family. MHC peptide exporter (TC 3.A.1.209) subfamily. As to quaternary structure, homodimer. Interacts (via TMD0 region) with LAMP1; this interaction strongly stabilizes ABCB9 and protects ABCB9 against lysosomal degradation. Interacts (via TMD0 region) with LAMP2 (isoform LAMP-2B). Interacts (via TMD0) with YIF1B; this interaction allows (but is not essential) the ER-to-Golgi trafficking and strongly depends on a salt bridge within TMD0. In terms of tissue distribution, found in testis, particularly in the Sertoli cells of the seminiferous tubules. Also expressed in kidney, brain, heart, lung, spleen, thymus, intestine and testis. Higher expression detected in brain and testis than in thymus and intestine.

It is found in the lysosome membrane. The catalysed reaction is a [oligopeptide](in) + ATP + H2O = a [oligopeptide](out) + ADP + phosphate + H(+). ATP-dependent low-affinity peptide transporter which translocates a broad spectrum of peptides from the cytosol to the lysosomal lumen for degradation. Displays a broad peptide length specificity from 6-mer up to at least 59-mer peptides with an optimum of 23-mers. Binds and transports smaller and larger peptides with the same affinity. Favors positively charged, aromatic or hydrophobic residues in the N- and C-terminal positions whereas negatively charged residues as well as asparagine and methionine are not favored. The polypeptide is ABC-type oligopeptide transporter ABCB9 (Rattus norvegicus (Rat)).